Reading from the N-terminus, the 292-residue chain is Histamine N-methyltransferase (292 aa).

Residue glutamate 28 coordinates substrate. Positions 60, 89, and 142 each coordinate S-adenosyl-L-methionine. Asparagine 283 is a binding site for substrate.

This sequence belongs to the class I-like SAM-binding methyltransferase superfamily. HNMT family. Monomer.

The protein resides in the cytoplasm. The enzyme catalyses histamine + S-adenosyl-L-methionine = N(tau)-methylhistamine + S-adenosyl-L-homocysteine + H(+). Its function is as follows. Inactivates histamine by N-methylation. Plays an important role in degrading histamine and in regulating the airway response to histamine. In Danio rerio (Zebrafish), this protein is Histamine N-methyltransferase (hnmt).